The primary structure comprises 303 residues: Lipoyl synthase (303 aa).

[4Fe-4S] cluster contacts are provided by cysteine 35, cysteine 40, cysteine 46, cysteine 61, cysteine 65, cysteine 68, and serine 273. Positions 47 to 262 (FRERQATFLI…KELAEKMGFR (216 aa)) constitute a Radical SAM core domain.

Belongs to the radical SAM superfamily. Lipoyl synthase family. [4Fe-4S] cluster serves as cofactor.

The protein localises to the cytoplasm. It catalyses the reaction [[Fe-S] cluster scaffold protein carrying a second [4Fe-4S](2+) cluster] + N(6)-octanoyl-L-lysyl-[protein] + 2 oxidized [2Fe-2S]-[ferredoxin] + 2 S-adenosyl-L-methionine + 4 H(+) = [[Fe-S] cluster scaffold protein] + N(6)-[(R)-dihydrolipoyl]-L-lysyl-[protein] + 4 Fe(3+) + 2 hydrogen sulfide + 2 5'-deoxyadenosine + 2 L-methionine + 2 reduced [2Fe-2S]-[ferredoxin]. The protein operates within protein modification; protein lipoylation via endogenous pathway; protein N(6)-(lipoyl)lysine from octanoyl-[acyl-carrier-protein]: step 2/2. Functionally, catalyzes the radical-mediated insertion of two sulfur atoms into the C-6 and C-8 positions of the octanoyl moiety bound to the lipoyl domains of lipoate-dependent enzymes, thereby converting the octanoylated domains into lipoylated derivatives. The chain is Lipoyl synthase from Geobacter sulfurreducens (strain ATCC 51573 / DSM 12127 / PCA).